We begin with the raw amino-acid sequence, 329 residues long: Haptoglobin (329 aa).

N-linked (GlcNAc...) asparagine glycosylation is present at N9. In terms of domain architecture, Sushi spans 13–70; sequence VSLPKPPVIENGYVEHMIRYQCKPFYKLHTEGDGVYTLNSEKHWTNKAVGEKLPECEA. Intrachain disulfides connect C34/C68 and C72/C189. A propeptide is located at residue R84. The region spanning 85-327 is the Peptidase S1 domain; it reads IMGGSVDAKG…VLAWVQETIA (243 aa). 2 N-linked (GlcNAc...) asparagine glycosylation sites follow: N107 and N214. Disulfide bonds link C232–C263 and C274–C304. The tract at residues 241-246 is interaction with CD163; it reads VPEKKS.

This sequence belongs to the peptidase S1 family. Tetramer of two alpha and two beta chains; disulfide-linked. The hemoglobin/haptoglobin complex is composed of a haptoglobin dimer bound to two hemoglobin alpha-beta dimers. Interacts with CD163. Interacts with ERGIC3. Expressed by the liver and secreted in plasma.

The protein localises to the secreted. It is found in the extracellular space. In terms of biological role, as a result of hemolysis, hemoglobin is found to accumulate in the kidney and is secreted in the urine. Haptoglobin captures, and combines with free plasma hemoglobin to allow hepatic recycling of heme iron and to prevent kidney damage. Haptoglobin also acts as an antioxidant, has antibacterial activity and plays a role in modulating many aspects of the acute phase response. Hemoglobin/haptoglobin complexes are rapidly cleared by the macrophage CD163 scavenger receptor expressed on the surface of liver Kupfer cells through an endocytic lysosomal degradation pathway. The sequence is that of Haptoglobin (HP) from Canis lupus familiaris (Dog).